An 89-amino-acid chain; its full sequence is Large ribosomal subunit protein bL27 (89 aa).

Residues 1-21 are disordered; it reads MAHKKAGGSSRNGRDSKGKRL.

The protein belongs to the bacterial ribosomal protein bL27 family.

The chain is Large ribosomal subunit protein bL27 from Bradyrhizobium sp. (strain ORS 278).